Reading from the N-terminus, the 671-residue chain is Talaropentaene synthase (671 aa).

Asp-92 contributes to the Mg(2+) binding site. A DDXXD 1 motif is present at residues 92 to 96; it reads DDMTD. The NSE/DTE motif lies at 223–231; sequence NDLYSYEKE. The isopentenyl diphosphate site is built by Lys-389, Arg-392, and His-421. 2 residues coordinate Mg(2+): Asp-428 and Asp-432. The DDXXD 2 motif lies at 428–432; sequence DDIED. Position 437 (Arg-437) interacts with dimethylallyl diphosphate. Arg-438 is an isopentenyl diphosphate binding site. Dimethylallyl diphosphate-binding residues include Lys-515, Thr-516, Gln-551, Asn-558, Lys-568, and Lys-578.

The protein in the N-terminal section; belongs to the terpene synthase family. It in the C-terminal section; belongs to the FPP/GGPP synthase family. The cofactor is Mg(2+).

The catalysed reaction is 5 isopentenyl diphosphate + dimethylallyl diphosphate = all-trans-hexaprenyl diphosphate + 5 diphosphate. The enzyme catalyses all-trans-hexaprenyl diphosphate = talaropentaene + diphosphate. Functionally, bifunctional terpene synthase that converts dimethylallyl diphosphate (DMAPP) and isopentenyl diphosphate (IPP) into talaropentaene as a single product. The C-terminal prenyltransferase (PT) domain of MpMS catalyzes formation of hexaprenyl diphosphate (HexPP), whereas the N-terminal terpene cyclase (TC) domain catalyzes the cyclization of HexPP to talaropentaene. This chain is Talaropentaene synthase, found in Talaromyces verruculosus (Penicillium verruculosum).